We begin with the raw amino-acid sequence, 132 residues long: Small ribosomal subunit protein uS8 (132 aa).

This sequence belongs to the universal ribosomal protein uS8 family. Part of the 30S ribosomal subunit. Contacts proteins S5 and S12.

One of the primary rRNA binding proteins, it binds directly to 16S rRNA central domain where it helps coordinate assembly of the platform of the 30S subunit. The sequence is that of Small ribosomal subunit protein uS8 from Xylella fastidiosa (strain M12).